We begin with the raw amino-acid sequence, 620 residues long: MTSPTSLDQLKQQIKIAPIVEHYAIKLKKKGKDFVALCPFHADQNPSMTVSVAKNIFKCFSCQVGGDGIAFIQKIDQVDWKTALNKALSILNLDSQYAVNFYLKEVDPKLKRYWDLHSALVDYYQTRLKLEPKEQGLTYLTETRKLSPQVIERFQLGLAFTLEDQYFLPSLLNYPWISPAIEKAELCFATEKFPEALGFFNQQTHYATFKSRIMIPIHDLKGNPVGFSGRALQKTEKIKYKNSAEHQWFKKSELLFNFHRIDKNTLKLYLVEGYFDVFALTSAGIGDVVGLMGLALSESHIIAFQQQLKALETVVLALDNDTAGHDATFKLLQELNAHGIIVEVVDWNQAAYKDWDELFLAEGSDAVKAKTHRVLNLVEYLVAYFKTKGFDERITVNKVIDIIAQNQKVTADTSFSRFLCQKLQQLLQYSDVETLFTQLQQQKLKVKVNKTTTFTQRAPIYESVVGVVDNSFRNESQPVAITKEFLVENNWKETKERVFHAEIFAYVLLDKQFLVELKQSDLDELFASLQTPLFDVALFIDKARLYWAKVQEPDWAVFNSILGEQQAMFPTTFLAQIKEFFLNKSLSYDPEDYEEDLQFFRQLIVKQKELLKYFKSMVEH.

The CHC2-type zinc finger occupies 38–62 (CPFHADQNPSMTVSVAKNIFKCFSC). The Toprim domain occupies 266 to 350 (LKLYLVEGYF…IVEVVDWNQA (85 aa)). Residues Glu272, Asp319, and Asp321 each coordinate Mg(2+).

Belongs to the DnaG primase family. As to quaternary structure, monomer. Interacts with DnaB. Requires Zn(2+) as cofactor. The cofactor is Mg(2+).

It carries out the reaction ssDNA + n NTP = ssDNA/pppN(pN)n-1 hybrid + (n-1) diphosphate.. Functionally, RNA polymerase that catalyzes the synthesis of short RNA molecules used as primers for DNA polymerase during DNA replication. The protein is DNA primase of Mycoplasma pneumoniae (strain ATCC 29342 / M129 / Subtype 1) (Mycoplasmoides pneumoniae).